The chain runs to 246 residues: MNARLTGLGLNLLSFAVGIGGWYLLTATGAVVLPGPVDVLERAVTLLLNGQLVGDIFASLRRVLSGFVLGVALAIPVGFLMGWYRIARSLIEPWVQFFRMIPPLAVIPLAIVTLGIDESPKIFVIFLASFLSSVVATYQGVISVDRTLINAARVLGAKDATIFARVIVPASVPFILVGVRIGLGSAWATVVAAELIAAQSGLGYRMQQAQLYYDLPTIFVSLVTIGILGLFMDRLLQAADRRLTQW.

Helical transmembrane passes span 12–32 (LLSFAVGIGGWYLLTATGAVV), 63–83 (VLSGFVLGVALAIPVGFLMGW), 94–114 (WVQFFRMIPPLAVIPLAIVTL), 122–142 (IFVIFLASFLSSVVATYQGVI), 172–192 (VPFILVGVRIGLGSAWATVVA), and 211–231 (LYYDLPTIFVSLVTIGILGLF). Positions 56 to 236 (IFASLRRVLS…ILGLFMDRLL (181 aa)) constitute an ABC transmembrane type-1 domain.

This sequence belongs to the binding-protein-dependent transport system permease family. In terms of assembly, the complex is composed of two ATP-binding proteins (BMEII0108), two transmembrane proteins (BMEII0107) and a solute-binding protein (BMEII0109).

It localises to the cell inner membrane. Functionally, probably part of an ABC transporter complex. Probably responsible for the translocation of the substrate across the membrane. This Brucella melitensis biotype 1 (strain ATCC 23456 / CCUG 17765 / NCTC 10094 / 16M) protein is Probable ABC transporter permease protein BMEII0107.